Reading from the N-terminus, the 361-residue chain is Phosphoserine aminotransferase (361 aa).

Arg43 contributes to the L-glutamate binding site. Pyridoxal 5'-phosphate is bound by residues 77-78, Trp103, Thr152, Asp172, and Gln195; that span reads AS. Lys196 bears the N6-(pyridoxal phosphate)lysine mark. 237–238 serves as a coordination point for pyridoxal 5'-phosphate; sequence NT.

It belongs to the class-V pyridoxal-phosphate-dependent aminotransferase family. SerC subfamily. In terms of assembly, homodimer. Pyridoxal 5'-phosphate is required as a cofactor.

The protein resides in the cytoplasm. The catalysed reaction is O-phospho-L-serine + 2-oxoglutarate = 3-phosphooxypyruvate + L-glutamate. It catalyses the reaction 4-(phosphooxy)-L-threonine + 2-oxoglutarate = (R)-3-hydroxy-2-oxo-4-phosphooxybutanoate + L-glutamate. The protein operates within amino-acid biosynthesis; L-serine biosynthesis; L-serine from 3-phospho-D-glycerate: step 2/3. It functions in the pathway cofactor biosynthesis; pyridoxine 5'-phosphate biosynthesis; pyridoxine 5'-phosphate from D-erythrose 4-phosphate: step 3/5. Functionally, catalyzes the reversible conversion of 3-phosphohydroxypyruvate to phosphoserine and of 3-hydroxy-2-oxo-4-phosphonooxybutanoate to phosphohydroxythreonine. This chain is Phosphoserine aminotransferase, found in Desulfatibacillum aliphaticivorans.